A 386-amino-acid polypeptide reads, in one-letter code: Methylthioribose-1-phosphate isomerase (386 aa).

Catalysis depends on Asp-255, which acts as the Proton donor.

Belongs to the eIF-2B alpha/beta/delta subunits family. MtnA subfamily.

The protein localises to the cytoplasm. Its subcellular location is the nucleus. It catalyses the reaction 5-(methylsulfanyl)-alpha-D-ribose 1-phosphate = 5-(methylsulfanyl)-D-ribulose 1-phosphate. The protein operates within amino-acid biosynthesis; L-methionine biosynthesis via salvage pathway; L-methionine from S-methyl-5-thio-alpha-D-ribose 1-phosphate: step 1/6. In terms of biological role, catalyzes the interconversion of methylthioribose-1-phosphate (MTR-1-P) into methylthioribulose-1-phosphate (MTRu-1-P). The sequence is that of Methylthioribose-1-phosphate isomerase from Trypanosoma brucei brucei (strain 927/4 GUTat10.1).